Consider the following 282-residue polypeptide: UDP-3-O-acyl-N-acetylglucosamine deacetylase (282 aa).

Zn(2+) is bound by residues His80, His240, and Asp244. His267 acts as the Proton donor in catalysis.

It belongs to the LpxC family. Requires Zn(2+) as cofactor.

It localises to the plastid. It is found in the chloroplast. It catalyses the reaction a UDP-3-O-[(3R)-3-hydroxyacyl]-N-acetyl-alpha-D-glucosamine + H2O = a UDP-3-O-[(3R)-3-hydroxyacyl]-alpha-D-glucosamine + acetate. It functions in the pathway glycolipid biosynthesis; lipid IV(A) biosynthesis; lipid IV(A) from (3R)-3-hydroxytetradecanoyl-[acyl-carrier-protein] and UDP-N-acetyl-alpha-D-glucosamine: step 2/6. In terms of biological role, catalyzes the hydrolysis of UDP-3-O-myristoyl-N-acetylglucosamine to form UDP-3-O-myristoylglucosamine and acetate. Involved in the biosynthesis of lipid A, a phosphorylated glycolipid that in bacteria anchors the lipopolysaccharide to the outer membrane of the cell. The target for the lipopolysaccharides produced in the chloroplast could either be the cell envelope of the eukaryote or the plastid membrane. In Cyanidium caldarium (Red alga), this protein is UDP-3-O-acyl-N-acetylglucosamine deacetylase.